The following is a 60-amino-acid chain: Large ribosomal subunit protein bL32 (60 aa).

The protein belongs to the bacterial ribosomal protein bL32 family.

This Thermotoga maritima (strain ATCC 43589 / DSM 3109 / JCM 10099 / NBRC 100826 / MSB8) protein is Large ribosomal subunit protein bL32 (rpmF).